Here is a 94-residue protein sequence, read N- to C-terminus: Small ubiquitin-related modifier 3-like (94 aa).

Lysine 11 participates in a covalent cross-link: Glycyl lysine isopeptide (Lys-Gly) (interchain with G-Cter in SUMO). The Ubiquitin-like domain maps to 15–92 (DHINLKVAGQ…IDVFQQQTGG (78 aa)). Glycine 92 is covalently cross-linked (Glycyl lysine isopeptide (Gly-Lys) (interchain with K-? in acceptor proteins)). The propeptide occupies 93-94 (SC).

Belongs to the ubiquitin family. SUMO subfamily. Interacts with sae2 and ube2i. Covalently attached to a number of proteins. Polymeric chains can be formed through Lys-11 cross-linking. In terms of processing, cleavage of precursor form by a sentrin-specific protease is necessary for function.

The protein localises to the cytoplasm. It localises to the nucleus. It is found in the PML body. Functionally, ubiquitin-like protein which can be covalently attached to target lysines either as a monomer or as a lysine-linked polymer. Does not seem to be involved in protein degradation and may function as an antagonist of ubiquitin in the degradation process. Plays a role in a number of cellular processes such as nuclear transport, DNA replication and repair, mitosis and signal transduction. Covalent attachment to its substrates requires prior activation by the E1 complex sae1-sae2 and linkage to the E2 enzyme ube2i. This is Small ubiquitin-related modifier 3-like (sumo3l) from Danio rerio (Zebrafish).